Reading from the N-terminus, the 195-residue chain is Large ribosomal subunit protein uL5 (195 aa).

The disordered stretch occupies residues 1-25; the sequence is MARVPPPALKKDKKEKKPPKDNSKN.

It belongs to the universal ribosomal protein uL5 family. In terms of assembly, component of the large ribosomal subunit.

It is found in the nucleus. The protein resides in the cytoplasm. Its function is as follows. Component of the ribosome, a large ribonucleoprotein complex responsible for the synthesis of proteins in the cell. The small ribosomal subunit (SSU) binds messenger RNAs (mRNAs) and translates the encoded message by selecting cognate aminoacyl-transfer RNA (tRNA) molecules. The large subunit (LSU) contains the ribosomal catalytic site termed the peptidyl transferase center (PTC), which catalyzes the formation of peptide bonds, thereby polymerizing the amino acids delivered by tRNAs into a polypeptide chain. The nascent polypeptides leave the ribosome through a tunnel in the LSU and interact with protein factors that function in enzymatic processing, targeting, and the membrane insertion of nascent chains at the exit of the ribosomal tunnel. The polypeptide is Large ribosomal subunit protein uL5 (RpL11) (Spodoptera frugiperda (Fall armyworm)).